The primary structure comprises 101 residues: NAD(P)H-quinone oxidoreductase subunit 4L (101 aa).

3 helical membrane passes run 3–23 (LRYF…GLIT), 30–50 (VLMS…AFSN), and 64–84 (VFVI…VLAI).

It belongs to the complex I subunit 4L family. NDH-1 can be composed of about 15 different subunits; different subcomplexes with different compositions have been identified which probably have different functions.

Its subcellular location is the cellular thylakoid membrane. The enzyme catalyses a plastoquinone + NADH + (n+1) H(+)(in) = a plastoquinol + NAD(+) + n H(+)(out). The catalysed reaction is a plastoquinone + NADPH + (n+1) H(+)(in) = a plastoquinol + NADP(+) + n H(+)(out). NDH-1 shuttles electrons from an unknown electron donor, via FMN and iron-sulfur (Fe-S) centers, to quinones in the respiratory and/or the photosynthetic chain. The immediate electron acceptor for the enzyme in this species is believed to be plastoquinone. Couples the redox reaction to proton translocation, and thus conserves the redox energy in a proton gradient. Cyanobacterial NDH-1 also plays a role in inorganic carbon-concentration. The chain is NAD(P)H-quinone oxidoreductase subunit 4L from Nostoc sp. (strain PCC 7120 / SAG 25.82 / UTEX 2576).